A 192-amino-acid chain; its full sequence is Flavin prenyltransferase UbiX (192 aa).

FMN is bound by residues 10 to 12, Ser-36, 92 to 95, and Arg-127; these read GAS and SMTT. The dimethylallyl phosphate site is built by Tyr-157 and Lys-173.

The protein belongs to the UbiX/PAD1 family.

The catalysed reaction is dimethylallyl phosphate + FMNH2 = prenylated FMNH2 + phosphate. Functionally, flavin prenyltransferase that catalyzes the synthesis of the prenylated FMN cofactor (prenyl-FMN) for 4-hydroxy-3-polyprenylbenzoic acid decarboxylase UbiD. The prenyltransferase is metal-independent and links a dimethylallyl moiety from dimethylallyl monophosphate (DMAP) to the flavin N5 and C6 atoms of FMN. This chain is Flavin prenyltransferase UbiX, found in Chlamydia pneumoniae (Chlamydophila pneumoniae).